The primary structure comprises 180 residues: NADH-quinone oxidoreductase subunit I (180 aa).

2 4Fe-4S ferredoxin-type domains span residues 50–80 and 90–119; these read LTRD…LQKA and EFFR…LTPD. The [4Fe-4S] cluster site is built by C60, C63, C66, C70, C99, C102, C105, and C109.

This sequence belongs to the complex I 23 kDa subunit family. In terms of assembly, NDH-1 is composed of 13 different subunits. Subunits NuoA, H, J, K, L, M, N constitute the membrane sector of the complex. It depends on [4Fe-4S] cluster as a cofactor.

Its subcellular location is the cell inner membrane. The enzyme catalyses a quinone + NADH + 5 H(+)(in) = a quinol + NAD(+) + 4 H(+)(out). NDH-1 shuttles electrons from NADH, via FMN and iron-sulfur (Fe-S) centers, to quinones in the respiratory chain. The immediate electron acceptor for the enzyme in this species is believed to be ubiquinone. Couples the redox reaction to proton translocation (for every two electrons transferred, four hydrogen ions are translocated across the cytoplasmic membrane), and thus conserves the redox energy in a proton gradient. This Shigella boydii serotype 4 (strain Sb227) protein is NADH-quinone oxidoreductase subunit I.